Consider the following 322-residue polypeptide: Tetraacyldisaccharide 4'-kinase (322 aa).

54-61 (SVGGTGKT) is a binding site for ATP.

It belongs to the LpxK family.

It carries out the reaction a lipid A disaccharide + ATP = a lipid IVA + ADP + H(+). The protein operates within glycolipid biosynthesis; lipid IV(A) biosynthesis; lipid IV(A) from (3R)-3-hydroxytetradecanoyl-[acyl-carrier-protein] and UDP-N-acetyl-alpha-D-glucosamine: step 6/6. Transfers the gamma-phosphate of ATP to the 4'-position of a tetraacyldisaccharide 1-phosphate intermediate (termed DS-1-P) to form tetraacyldisaccharide 1,4'-bis-phosphate (lipid IVA). In Francisella tularensis subsp. holarctica (strain FTNF002-00 / FTA), this protein is Tetraacyldisaccharide 4'-kinase.